Consider the following 177-residue polypeptide: Tumor necrosis factor ligand superfamily member 18 (177 aa).

The Cytoplasmic portion of the chain corresponds to 1–27; the sequence is MCLSHLENMPLSHSRTQGAQRSSWKLW. Residues 28–48 traverse the membrane as a helical; Signal-anchor for type II membrane protein segment; that stretch reads LFCSIVMLLFLCSFSWLIFIF. Positions 47 to 170 constitute a THD domain; it reads IFLQLETAKE…NNTYWGIILL (124 aa). The Extracellular portion of the chain corresponds to 49–177; sequence LQLETAKEPC…ILLANPQFIS (129 aa). The cysteines at positions 58 and 78 are disulfide-linked. 2 N-linked (GlcNAc...) asparagine glycosylation sites follow: N129 and N161.

The protein belongs to the tumor necrosis factor family. Homodimer. Homotrimer. Expressed at high levels in the small intestine, ovary, testis, kidney and endothelial cells.

The protein localises to the cell membrane. Cytokine that binds to TNFRSF18/AITR/GITR. Regulates T-cell responses. Can function as costimulator and lower the threshold for T-cell activation and T-cell proliferation. Important for interactions between activated T-lymphocytes and endothelial cells. Mediates activation of NF-kappa-B. Triggers increased phosphorylation of STAT1 and up-regulates expression of VCAM1 and ICAM1. Promotes leukocyte adhesion to endothelial cells. Regulates migration of monocytes from the splenic reservoir to sites of inflammation. This is Tumor necrosis factor ligand superfamily member 18 from Homo sapiens (Human).